The primary structure comprises 214 residues: Adenylate kinase (214 aa).

An ATP-binding site is contributed by 10-15 (GSGKGT). Residues 30–59 (STGDMLRAAVREGTPLGMEAKKIMDAGQLV) are NMP. AMP is bound by residues T31, R36, 57–59 (QLV), 85–88 (GFPR), and Q92. Residues 122 to 159 (GRRVHPASGRTYHVVFNPPKVEGRDDETGEPLVQREDD) form an LID region. Residues R123 and 132 to 133 (TY) contribute to the ATP site. 2 residues coordinate AMP: R156 and R167. Residue G200 coordinates ATP.

This sequence belongs to the adenylate kinase family. In terms of assembly, monomer.

Its subcellular location is the cytoplasm. It carries out the reaction AMP + ATP = 2 ADP. It participates in purine metabolism; AMP biosynthesis via salvage pathway; AMP from ADP: step 1/1. Functionally, catalyzes the reversible transfer of the terminal phosphate group between ATP and AMP. Plays an important role in cellular energy homeostasis and in adenine nucleotide metabolism. The protein is Adenylate kinase of Methylococcus capsulatus (strain ATCC 33009 / NCIMB 11132 / Bath).